The sequence spans 239 residues: Ribose-5-phosphate isomerase A (239 aa).

Substrate is bound by residues 40–43 (SGST), 96–99 (DGAD), and 110–113 (KGGG). The active-site Proton acceptor is Glu-119. Substrate is bound at residue Lys-137.

The protein belongs to the ribose 5-phosphate isomerase family. As to quaternary structure, homodimer.

It catalyses the reaction aldehydo-D-ribose 5-phosphate = D-ribulose 5-phosphate. It functions in the pathway carbohydrate degradation; pentose phosphate pathway; D-ribose 5-phosphate from D-ribulose 5-phosphate (non-oxidative stage): step 1/1. Catalyzes the reversible conversion of ribose-5-phosphate to ribulose 5-phosphate. This is Ribose-5-phosphate isomerase A from Methanococcus vannielii (strain ATCC 35089 / DSM 1224 / JCM 13029 / OCM 148 / SB).